We begin with the raw amino-acid sequence, 173 residues long: Protein FAM180A (173 aa).

A signal peptide spans 1–17 (MSWKALTILLVFSSTQA).

The protein belongs to the FAM180 family.

It localises to the secreted. The chain is Protein FAM180A (Fam180a) from Mus musculus (Mouse).